The following is an 829-amino-acid chain: Leucine--tRNA ligase (829 aa).

The 'HIGH' region motif lies at P40–H50. Residues K581–S585 carry the 'KMSKS' region motif. K584 lines the ATP pocket.

It belongs to the class-I aminoacyl-tRNA synthetase family.

It is found in the cytoplasm. The enzyme catalyses tRNA(Leu) + L-leucine + ATP = L-leucyl-tRNA(Leu) + AMP + diphosphate. In Nitratidesulfovibrio vulgaris (strain ATCC 29579 / DSM 644 / CCUG 34227 / NCIMB 8303 / VKM B-1760 / Hildenborough) (Desulfovibrio vulgaris), this protein is Leucine--tRNA ligase.